Here is a 68-residue protein sequence, read N- to C-terminus: uncharacterized protein (68 aa).

An N-terminal signal peptide occupies residues 1 to 27 (MKGLLCFIYILSAILIGCVFLNKDVEA).

This is an uncharacterized protein from Invertebrate iridescent virus 6 (IIV-6).